The chain runs to 86 residues: Small ribosomal subunit protein bS20 (86 aa).

Basic residues predominate over residues 1 to 27; it reads MANSKSAKKRAIQAEKRRQHNASRRSM. The interval 1 to 28 is disordered; it reads MANSKSAKKRAIQAEKRRQHNASRRSMM.

This sequence belongs to the bacterial ribosomal protein bS20 family.

In terms of biological role, binds directly to 16S ribosomal RNA. The chain is Small ribosomal subunit protein bS20 from Vibrio parahaemolyticus serotype O3:K6 (strain RIMD 2210633).